The following is a 345-amino-acid chain: Eukaryotic translation initiation factor 3 subunit F (345 aa).

In terms of domain architecture, MPN spans 30 to 166 (VVIQPQAIFS…TRAYISAPVG (137 aa)). The interval 310-345 (EGASAEAGAQRGQRGGRGGRGGQQRTQERASEEVRA) is disordered. Low complexity predominate over residues 312–321 (ASAEAGAQRG). A compositionally biased stretch (gly residues) spans 322 to 331 (QRGGRGGRGG). Residues 335-345 (TQERASEEVRA) are compositionally biased toward basic and acidic residues.

The protein belongs to the eIF-3 subunit F family. Component of the eukaryotic translation initiation factor 3 (eIF-3) complex.

It localises to the cytoplasm. Component of the eukaryotic translation initiation factor 3 (eIF-3) complex, which is involved in protein synthesis of a specialized repertoire of mRNAs and, together with other initiation factors, stimulates binding of mRNA and methionyl-tRNAi to the 40S ribosome. The eIF-3 complex specifically targets and initiates translation of a subset of mRNAs involved in cell proliferation. The polypeptide is Eukaryotic translation initiation factor 3 subunit F (Neosartorya fischeri (strain ATCC 1020 / DSM 3700 / CBS 544.65 / FGSC A1164 / JCM 1740 / NRRL 181 / WB 181) (Aspergillus fischerianus)).